The sequence spans 132 residues: Small ribosomal subunit protein uS8 (132 aa).

It belongs to the universal ribosomal protein uS8 family. As to quaternary structure, part of the 30S ribosomal subunit. Contacts proteins S5 and S12.

One of the primary rRNA binding proteins, it binds directly to 16S rRNA central domain where it helps coordinate assembly of the platform of the 30S subunit. This chain is Small ribosomal subunit protein uS8, found in Macrococcus caseolyticus (strain JCSC5402) (Macrococcoides caseolyticum).